A 449-amino-acid polypeptide reads, in one-letter code: Glycine receptor subunit alpha-2 (449 aa).

The signal sequence occupies residues 1-27 (MTRPSVKLLTTLLACLMEMLNFRVSSG). Topologically, residues 28–255 (KDPDLLSSSS…FHLERQMGYY (228 aa)) are extracellular. Asn-70 carries N-linked (GlcNAc...) asparagine glycosylation. Glycine contacts are provided by Arg-97 and Ser-161. Arg-97 serves as a coordination point for strychnine. The cysteines at positions 170 and 184 are disulfide-linked. 2 residues coordinate Zn(2+): Glu-224 and Asp-226. Cys-230 and Cys-241 are joined by a disulfide. Glycine is bound at residue Thr-236. Position 247 (His-247) interacts with Zn(2+). The helical transmembrane segment at 256–276 (LIQMYIPSLLIVILSWVSFWI) threads the bilayer. The Cytoplasmic segment spans residues 277–282 (NMDAAP). The chain crosses the membrane as a helical span at residues 283–302 (ARVALGITTVLTMTTQSSGS). The Extracellular segment spans residues 303 to 313 (RASLPKVSYVK). A helical transmembrane segment spans residues 314 to 334 (AIDIWMAVCLLFVFAALLEYA). The Cytoplasmic portion of the chain corresponds to 335–420 (GVNFVSRQQK…RAKRIDTISR (86 aa)). A helical transmembrane segment spans residues 421–441 (AAFPLAFLIFNVFYWITYKII). Residues 442–449 (RHESARKD) lie on the Extracellular side of the membrane.

Belongs to the ligand-gated ion channel (TC 1.A.9) family.

It localises to the postsynaptic cell membrane. Its subcellular location is the synapse. The protein resides in the cell membrane. The protein localises to the cell projection. It catalyses the reaction chloride(in) = chloride(out). Its activity is regulated as follows. Channel opening is triggered by extracellular glycine. Channel opening is also triggered by taurine and beta-alanine. Inhibited by strychnine. Functionally, subunit of heteromeric glycine-gated chloride channels. Plays a role in synaptic plasticity. Contributes to the generation of inhibitory postsynaptic currents, and is involved in the down-regulation of neuronal excitability. In Danio rerio (Zebrafish), this protein is Glycine receptor subunit alpha-2 (glra2).